Reading from the N-terminus, the 844-residue chain is Probable inorganic carbon transporter subunit DabA 1 (844 aa).

The Zn(2+) site is built by Cys-359, Asp-361, His-543, and Cys-558.

It belongs to the inorganic carbon transporter (TC 9.A.2) DabA family. Forms a complex with DabB. The cofactor is Zn(2+).

Its subcellular location is the cell inner membrane. Functionally, part of an energy-coupled inorganic carbon pump. The polypeptide is Probable inorganic carbon transporter subunit DabA 1 (Bradyrhizobium sp. (strain BTAi1 / ATCC BAA-1182)).